A 449-amino-acid chain; its full sequence is UNC93-like protein MFSD11 (449 aa).

The chain crosses the membrane as a helical span at residues 8–28 (LFNIIILGVAFMFMFTAFQTC). Asn-40 carries N-linked (GlcNAc...) asparagine glycosylation. Transmembrane regions (helical) follow at residues 53–73 (AIIYGVFSASNLITPSVVAIV), 74–94 (GPQLSMFASGLFYSMYIAVFI), 96–116 (PFPWSFYTASVFIGIAAAVLW), 138–158 (IFWALLQSSLFFGNLYIYFAW), and 170–190 (RTVFIALTVISLVGTVLFFLI). Ser-204 is modified (phosphoserine). The next 6 helical transmembrane spans lie at 239 to 259 (MLLLSITTAYTGLELTFFSGV), 277 to 297 (LIGLSGIFIGIGEILGGSLFG), 309 to 329 (PVVLLGILVHFIAFYLIFLNM), 359 to 379 (FLLGLGDSCFNTQLLSILGFL), 385 to 405 (APAFAIFKFVQSICAAVAFFY), and 410 to 430 (LLHWQLLVMVIFGFFGTISFF).

It belongs to the unc-93 family.

It localises to the membrane. The protein is UNC93-like protein MFSD11 (MFSD11) of Homo sapiens (Human).